A 424-amino-acid polypeptide reads, in one-letter code: UDP-N-acetylglucosamine 1-carboxyvinyltransferase (424 aa).

22–23 (KN) serves as a coordination point for phosphoenolpyruvate. Residue Arg93 coordinates UDP-N-acetyl-alpha-D-glucosamine. Cys117 functions as the Proton donor in the catalytic mechanism. Cys117 carries the post-translational modification 2-(S-cysteinyl)pyruvic acid O-phosphothioketal. UDP-N-acetyl-alpha-D-glucosamine-binding positions include 162–165 (KVSV), Asp307, and Ile329.

This sequence belongs to the EPSP synthase family. MurA subfamily.

It localises to the cytoplasm. It carries out the reaction phosphoenolpyruvate + UDP-N-acetyl-alpha-D-glucosamine = UDP-N-acetyl-3-O-(1-carboxyvinyl)-alpha-D-glucosamine + phosphate. The protein operates within cell wall biogenesis; peptidoglycan biosynthesis. In terms of biological role, cell wall formation. Adds enolpyruvyl to UDP-N-acetylglucosamine. The polypeptide is UDP-N-acetylglucosamine 1-carboxyvinyltransferase (Actinobacillus pleuropneumoniae serotype 5b (strain L20)).